The primary structure comprises 144 residues: Small ribosomal subunit protein bS6 (144 aa).

Residues 92–144 are disordered; sequence KVDGHDEGPSVQMQKRDDRGDREERGDRGDRGDRGPRGDRGPREDRGPRPERR. Basic and acidic residues predominate over residues 93–144; it reads VDGHDEGPSVQMQKRDDRGDREERGDRGDRGDRGPRGDRGPREDRGPRPERR.

It belongs to the bacterial ribosomal protein bS6 family.

Binds together with bS18 to 16S ribosomal RNA. This chain is Small ribosomal subunit protein bS6 (rpsF), found in Rhodobacter capsulatus (strain ATCC BAA-309 / NBRC 16581 / SB1003).